Consider the following 82-residue polypeptide: MAVKIRLKRMGAKKAPFYRVVVADSRSPRDGRFVEEIGYYNPITEPSTIKLDEEKVQKWIKNGAQPTDTVKKLIEKAGISVK.

It belongs to the bacterial ribosomal protein bS16 family.

The chain is Small ribosomal subunit protein bS16 from Clostridium botulinum (strain Okra / Type B1).